The following is a 426-amino-acid chain: FK506-binding protein 3 (426 aa).

Disordered stretches follow at residues 37-143 (SLDP…PKHQ) and 171-314 (TGNY…KKKK). Composition is skewed to acidic residues over residues 65-94 (DYFE…EAEE), 111-131 (EDEE…DDVS), and 181-225 (QDEE…SEEE). 3 stretches are compositionally biased toward basic and acidic residues: residues 226 to 257 (GTPK…ESTS), 264 to 278 (KKDE…KELE), and 287 to 311 (VEKD…DGDK). The PPIase FKBP-type domain occupies 340–426 (GAKVGIRYIG…TFDIKLVSLK (87 aa)).

Belongs to the FKBP-type PPIase family. FKBP3/4 subfamily.

It is found in the nucleus. The protein resides in the nucleolus. The catalysed reaction is [protein]-peptidylproline (omega=180) = [protein]-peptidylproline (omega=0). Inhibited by both FK506 and rapamycin. Functionally, PPIases accelerate the folding of proteins. It catalyzes the cis-trans isomerization of proline imidic peptide bonds in oligopeptides. The protein is FK506-binding protein 3 (FPR3) of Candida albicans (strain SC5314 / ATCC MYA-2876) (Yeast).